A 115-amino-acid chain; its full sequence is T cell receptor delta variable 2 (115 aa).

The first 19 residues, 1–19, serve as a signal peptide directing secretion; that stretch reads MQRISSLIHLSLFWAGVMS. The region spanning 25–115 is the Ig-like domain; that stretch reads PEHQTVPVSI…EGSYYCACDT (91 aa). An intrachain disulfide couples Cys42 to Cys111.

Gamma-delta TR is a heterodimer composed of a gamma and delta chain; disulfide-linked. The gamma-delta TR is associated with the transmembrane signaling CD3 coreceptor proteins following the stoichiometry: a single gamma-delta TR heterodimer associates with one CD3D-CD3E heterodimer, one CD3G-CD3E heterodimer and one CD247 homodimer forming a stable octameric structure. Upon activation, gamma-delta TR complex associates with FCER1G to initiate intracellular signaling.

The protein localises to the cell membrane. Its function is as follows. V region of the variable domain of T cell receptor (TR) delta chain that participates in the antigen recognition. Gamma-delta TRs recognize a variety of self and foreign non-peptide antigens frequently expressed at the epithelial boundaries between the host and external environment, including endogenous lipids presented by MH-like protein CD1D and phosphoantigens presented by butyrophilin-like molecule BTN3A1. Upon antigen recognition induces rapid, innate-like immune responses involved in pathogen clearance and tissue repair. Binding of gamma-delta TR complex to antigen triggers phosphorylation of immunoreceptor tyrosine-based activation motifs (ITAMs) in the CD3 chains by the LCK and FYN kinases, allowing the recruitment, phosphorylation, and activation of ZAP70 that facilitates phosphorylation of the scaffolding proteins LCP2 and LAT. This lead to the formation of a supramolecular signalosome that recruits the phospholipase PLCG1, resulting in calcium mobilization and ERK activation, ultimately leading to T cell expansion and differentiation into effector cells. Gamma-delta TRs are produced through somatic rearrangement of a limited repertoire of variable (V), diversity (D), and joining (J) genes. The potential diversity of gamma-delta TRs is conferred by the unique ability to rearrange (D) genes in tandem and to utilize all three reading frames. The combinatorial diversity is considerably increased by the sequence exonuclease trimming and random nucleotide (N) region additions which occur during the V-(D)-J rearrangements. This is T cell receptor delta variable 2 from Homo sapiens (Human).